The sequence spans 47 residues: Large ribosomal subunit protein bL34 (47 aa).

It belongs to the bacterial ribosomal protein bL34 family.

This Mycobacterium ulcerans (strain Agy99) protein is Large ribosomal subunit protein bL34.